A 1105-amino-acid chain; its full sequence is Lysylphosphatidylglycerol biosynthesis bifunctional protein LysX (1105 aa).

Residues 1–603 (MTVTKPRSVQ…LLHHDGSAPD (603 aa)) form a phosphatidylglycerol lysyltransferase region. Helical transmembrane passes span 20–40 (VPAA…LASI), 62–82 (FPDT…ALAA), 86–106 (IAWL…AADI), 117–137 (FGEN…VLGY), 154–174 (AVLV…VDLF), 186–203 (YVAN…DLFT), and 208–228 (VFLN…ATIV). The tract at residues 604–1105 (VSGLRQSAIA…TLPFPLAKPH (502 aa)) is lysine--tRNA ligase. The Mg(2+) site is built by aspartate 1017 and glutamate 1024.

In the N-terminal section; belongs to the LPG synthetase family. The protein in the C-terminal section; belongs to the class-II aminoacyl-tRNA synthetase family. The cofactor is Mg(2+).

The protein localises to the cell membrane. It catalyses the reaction tRNA(Lys) + L-lysine + ATP = L-lysyl-tRNA(Lys) + AMP + diphosphate. The enzyme catalyses L-lysyl-tRNA(Lys) + a 1,2-diacyl-sn-glycero-3-phospho-(1'-sn-glycerol) = a 1,2-diacyl-sn-glycero-3-phospho-1'-(3'-O-L-lysyl)-sn-glycerol + tRNA(Lys). In terms of biological role, catalyzes the production of L-lysyl-tRNA(Lys)transfer and the transfer of a lysyl group from L-lysyl-tRNA(Lys) to membrane-bound phosphatidylglycerol (PG), which produces lysylphosphatidylglycerol (LPG), one of the components of the bacterial membrane with a positive net charge. LPG synthesis contributes to the resistance to cationic antimicrobial peptides (CAMPs) and likely protects M.tuberculosis against the CAMPs produced by competiting microorganisms (bacteriocins). In fact, the modification of anionic phosphatidylglycerol with positively charged L-lysine results in repulsion of the peptides. The chain is Lysylphosphatidylglycerol biosynthesis bifunctional protein LysX (lysX) from Mycobacterium ulcerans (strain Agy99).